A 476-amino-acid chain; its full sequence is Glycogen synthase (476 aa).

Residue lysine 15 participates in ADP-alpha-D-glucose binding.

It belongs to the glycosyltransferase 1 family. Bacterial/plant glycogen synthase subfamily.

It catalyses the reaction [(1-&gt;4)-alpha-D-glucosyl](n) + ADP-alpha-D-glucose = [(1-&gt;4)-alpha-D-glucosyl](n+1) + ADP + H(+). It functions in the pathway glycan biosynthesis; glycogen biosynthesis. Its function is as follows. Synthesizes alpha-1,4-glucan chains using ADP-glucose. This chain is Glycogen synthase, found in Haemophilus influenzae (strain PittEE).